Reading from the N-terminus, the 122-residue chain is Acidic phospholipase A2 CTs-A3 (122 aa).

Disulfide bonds link C26-C116, C28-C44, C43-C95, C49-C122, C50-C88, C57-C81, and C75-C86. Residues Y27, G29, and G31 each coordinate Ca(2+). H47 is a catalytic residue. D48 contacts Ca(2+). The active site involves D89.

Ca(2+) serves as cofactor. In terms of tissue distribution, expressed by the venom gland.

The protein localises to the secreted. It catalyses the reaction a 1,2-diacyl-sn-glycero-3-phosphocholine + H2O = a 1-acyl-sn-glycero-3-phosphocholine + a fatty acid + H(+). In terms of biological role, snake venom phospholipase A2 (PLA2) that shows a moderate inhibition of ADP-induced human platelet aggregation when tested on platelet rich plasma. Exhibits moderate hydrolytic activities and prefers the anionic micelles (dPPC with deoxycholate) to the zwitterionic micelles (dPPC with Triton X-100). PLA2 catalyzes the calcium-dependent hydrolysis of the 2-acyl groups in 3-sn-phosphoglycerides. The protein is Acidic phospholipase A2 CTs-A3 of Trimeresurus stejnegeri (Chinese green tree viper).